A 587-amino-acid chain; its full sequence is Arginine--tRNA ligase (587 aa).

The 'HIGH' region motif lies at Ala126–His136.

Belongs to the class-I aminoacyl-tRNA synthetase family. Monomer.

The protein resides in the cytoplasm. It catalyses the reaction tRNA(Arg) + L-arginine + ATP = L-arginyl-tRNA(Arg) + AMP + diphosphate. This Aromatoleum aromaticum (strain DSM 19018 / LMG 30748 / EbN1) (Azoarcus sp. (strain EbN1)) protein is Arginine--tRNA ligase.